A 125-amino-acid polypeptide reads, in one-letter code: MLTSKIYKLLTERDVLDFKLKIFIRRNVFITHLFFLLHSLLLFLSQFCRREFAFFLPTINLVTHSIKFITLFFFFLNSWASTLSCNPIMARGCHFPILNRPNFVSQILSKFCRMRNNNDTTFKSF.

The next 2 helical transmembrane spans lie at 28–48 (VFIT…SQFC) and 54–74 (FFLP…LFFF).

It is found in the membrane. This is an uncharacterized protein from Saccharomyces cerevisiae (strain ATCC 204508 / S288c) (Baker's yeast).